We begin with the raw amino-acid sequence, 380 residues long: Cytochrome b (380 aa).

4 helical membrane passes run 34-54 (FGSLLGICLATQILTGLLLAM), 78-99 (WLIRNLHANGASLFFICIYMHI), 114-134 (WNTGIILLLTLMATAFVGYVL), and 179-199 (FFALHFLLPFLIAGLTLIHLT). Heme b contacts are provided by His84 and His98. Positions 183 and 197 each coordinate heme b. His202 provides a ligand contact to a ubiquinone. 4 helical membrane-spanning segments follow: residues 227–247 (LKDILGFMLMYLPLMTLALFT), 289–309 (LGGVLALAASVLILFLSPLLH), 321–341 (LSQSLFWLLVTNLLILTWVGS), and 348–368 (FIIIGQLASLSYFTTLLILLP).

The protein belongs to the cytochrome b family. The cytochrome bc1 complex contains 11 subunits: 3 respiratory subunits (MT-CYB, CYC1 and UQCRFS1), 2 core proteins (UQCRC1 and UQCRC2) and 6 low-molecular weight proteins (UQCRH/QCR6, UQCRB/QCR7, UQCRQ/QCR8, UQCR10/QCR9, UQCR11/QCR10 and a cleavage product of UQCRFS1). This cytochrome bc1 complex then forms a dimer. Requires heme b as cofactor.

The protein localises to the mitochondrion inner membrane. In terms of biological role, component of the ubiquinol-cytochrome c reductase complex (complex III or cytochrome b-c1 complex) that is part of the mitochondrial respiratory chain. The b-c1 complex mediates electron transfer from ubiquinol to cytochrome c. Contributes to the generation of a proton gradient across the mitochondrial membrane that is then used for ATP synthesis. This is Cytochrome b (MT-CYB) from Falco peregrinus (Peregrine falcon).